A 111-amino-acid polypeptide reads, in one-letter code: 2Fe-2S ferredoxin (111 aa).

The 104-residue stretch at 1–104 folds into the 2Fe-2S ferredoxin-type domain; sequence MPKIFFLPHK…DIEVQIPLYN (104 aa). Positions 42, 48, 51, and 87 each coordinate [2Fe-2S] cluster.

It belongs to the adrenodoxin/putidaredoxin family. [2Fe-2S] cluster is required as a cofactor.

In terms of biological role, ferredoxin are iron-sulfur proteins that transfer electrons in a wide variety of metabolic reactions. The polypeptide is 2Fe-2S ferredoxin (fdx) (Buchnera aphidicola subsp. Schizaphis graminum (strain Sg)).